We begin with the raw amino-acid sequence, 122 residues long: Small ribosomal subunit protein uS13 (122 aa).

The disordered stretch occupies residues 94–122; sequence LSLPVRGQRTKTNSRTRKGKRKTVAGKKK. The span at 101–122 shows a compositional bias: basic residues; sequence QRTKTNSRTRKGKRKTVAGKKK.

Belongs to the universal ribosomal protein uS13 family. In terms of assembly, part of the 30S ribosomal subunit. Forms a loose heterodimer with protein S19. Forms two bridges to the 50S subunit in the 70S ribosome.

Its function is as follows. Located at the top of the head of the 30S subunit, it contacts several helices of the 16S rRNA. In the 70S ribosome it contacts the 23S rRNA (bridge B1a) and protein L5 of the 50S subunit (bridge B1b), connecting the 2 subunits; these bridges are implicated in subunit movement. Contacts the tRNAs in the A and P-sites. In Chlamydia trachomatis serovar A (strain ATCC VR-571B / DSM 19440 / HAR-13), this protein is Small ribosomal subunit protein uS13.